The sequence spans 330 residues: Phosphatidylglycerol--prolipoprotein diacylglyceryl transferase (330 aa).

3 helical membrane passes run 22-42 (LPIR…LVVG), 57-77 (YDIA…YHLA), and 97-117 (IWDG…GAWL). Arg145 is a binding site for a 1,2-diacyl-sn-glycero-3-phospho-(1'-sn-glycerol). 2 helical membrane-spanning segments follow: residues 193–213 (VVQP…FALI) and 257–277 (INSF…ILAP).

This sequence belongs to the Lgt family.

It localises to the cell membrane. It catalyses the reaction L-cysteinyl-[prolipoprotein] + a 1,2-diacyl-sn-glycero-3-phospho-(1'-sn-glycerol) = an S-1,2-diacyl-sn-glyceryl-L-cysteinyl-[prolipoprotein] + sn-glycerol 1-phosphate + H(+). It participates in protein modification; lipoprotein biosynthesis (diacylglyceryl transfer). Functionally, catalyzes the transfer of the diacylglyceryl group from phosphatidylglycerol to the sulfhydryl group of the N-terminal cysteine of a prolipoprotein, the first step in the formation of mature lipoproteins. The polypeptide is Phosphatidylglycerol--prolipoprotein diacylglyceryl transferase (Mycobacterium leprae (strain Br4923)).